A 359-amino-acid polypeptide reads, in one-letter code: Fructose-bisphosphate aldolase (359 aa).

D-glyceraldehyde 3-phosphate is bound at residue S50. The Proton donor role is filled by D83. Zn(2+) is bound by residues H84, D105, E142, and H198. G199 contacts dihydroxyacetone phosphate. H232 contributes to the Zn(2+) binding site. Residues 233 to 235 (GSS) and 275 to 278 (NIDT) contribute to the dihydroxyacetone phosphate site.

Belongs to the class II fructose-bisphosphate aldolase family. Zn(2+) is required as a cofactor.

It carries out the reaction beta-D-fructose 1,6-bisphosphate = D-glyceraldehyde 3-phosphate + dihydroxyacetone phosphate. It participates in carbohydrate degradation; glycolysis; D-glyceraldehyde 3-phosphate and glycerone phosphate from D-glucose: step 4/4. Catalyzes the aldol condensation of dihydroxyacetone phosphate (DHAP or glycerone-phosphate) with glyceraldehyde 3-phosphate (G3P) to form fructose 1,6-bisphosphate (FBP) in gluconeogenesis and the reverse reaction in glycolysis. The chain is Fructose-bisphosphate aldolase (fba) from Nostoc commune.